Consider the following 949-residue polypeptide: Serine/threonine-protein kinase KIPK2 (949 aa).

Disordered stretches follow at residues 79–116 (LETS…VGPS), 323–344 (TALS…TEKS), 407–426 (STST…DKNV), and 495–525 (SSEK…SNLS). The span at 81-94 (TSASAGTSRSTSPS) shows a compositional bias: low complexity. Composition is skewed to polar residues over residues 407–420 (STST…NTSH) and 495–512 (SSEK…LGDY). A compositionally biased stretch (low complexity) spans 513–525 (SSSTSMSEESNLS). The Protein kinase domain occupies 559–898 (FNLLKKLGCG…AAEIKRHPFF (340 aa)). ATP is bound by residues 565–573 (LGCGDIGTV) and Lys-588. Asp-684 acts as the Proton acceptor in catalysis.

The protein belongs to the protein kinase superfamily. Ser/Thr protein kinase family. In terms of assembly, interacts with KCBP, PERK8, PERK9, PERK10 and PERK13.

It catalyses the reaction L-seryl-[protein] + ATP = O-phospho-L-seryl-[protein] + ADP + H(+). It carries out the reaction L-threonyl-[protein] + ATP = O-phospho-L-threonyl-[protein] + ADP + H(+). In terms of biological role, serine/threonine-protein kinase that could be involved in the negative regulation of root growth. In Arabidopsis thaliana (Mouse-ear cress), this protein is Serine/threonine-protein kinase KIPK2.